The chain runs to 677 residues: Elongation factor G 2 (677 aa).

One can recognise a tr-type G domain in the interval 8–283 (SRIRNIGIIA…AVVNFLPSPE (276 aa)). GTP contacts are provided by residues 17–24 (AHIDAGKT), 81–85 (DTPGH), and 135–138 (NKMD).

Belongs to the TRAFAC class translation factor GTPase superfamily. Classic translation factor GTPase family. EF-G/EF-2 subfamily.

It localises to the cytoplasm. Catalyzes the GTP-dependent ribosomal translocation step during translation elongation. During this step, the ribosome changes from the pre-translocational (PRE) to the post-translocational (POST) state as the newly formed A-site-bound peptidyl-tRNA and P-site-bound deacylated tRNA move to the P and E sites, respectively. Catalyzes the coordinated movement of the two tRNA molecules, the mRNA and conformational changes in the ribosome. In Syntrophus aciditrophicus (strain SB), this protein is Elongation factor G 2.